Consider the following 465-residue polypeptide: Uridine kinase-like protein 5 (465 aa).

The interval 26 to 230 (LKQPFVIGVA…IVQHIRTKLC (205 aa)) is uridine kinase. Residues 240 to 465 (NIFIISSTFQ…SLSTNLKLRS (226 aa)) form a uracil phosphoribosyltransferase region. GTP-binding positions include K264, R273, and 307 to 310 (CKRL). 5-phospho-alpha-D-ribose 1-diphosphate is bound by residues R317 and R342. R362 serves as a coordination point for GTP. 5-phospho-alpha-D-ribose 1-diphosphate contacts are provided by residues D368, 373 to 376 (SGYS), and E439. A uracil-binding site is contributed by 438–440 (GEF).

In the N-terminal section; belongs to the uridine kinase family. This sequence in the C-terminal section; belongs to the UPRTase family. Mg(2+) is required as a cofactor.

It carries out the reaction UMP + diphosphate = 5-phospho-alpha-D-ribose 1-diphosphate + uracil. The catalysed reaction is cytidine + ATP = CMP + ADP + H(+). It catalyses the reaction uridine + ATP = UMP + ADP + H(+). Its pathway is pyrimidine metabolism; UMP biosynthesis via salvage pathway; UMP from uracil: step 1/1. The protein operates within pyrimidine metabolism; CTP biosynthesis via salvage pathway; CTP from cytidine: step 1/3. It participates in pyrimidine metabolism; UMP biosynthesis via salvage pathway; UMP from uridine: step 1/1. Allosterically activated by GTP. In terms of biological role, involved in the pyrimidine salvage pathway. This chain is Uridine kinase-like protein 5 (UKL5), found in Arabidopsis thaliana (Mouse-ear cress).